The primary structure comprises 402 residues: Protein kinase US3 homolog (402 aa).

Disordered stretches follow at residues 1 to 21 (MSSSPEAETMECGISSSKVHD) and 46 to 88 (FPDS…SPET). The Protein kinase domain maps to 102–386 (YNIVSSLSPG…AQDILMLPLF (285 aa)). ATP is bound by residues 108 to 116 (LSPGSEGYI) and Lys129. Asp218 functions as the Proton acceptor in the catalytic mechanism.

This sequence belongs to the protein kinase superfamily. Ser/Thr protein kinase family. Post-translationally, phosphorylated by UL13 homolog; this phosphorylation regulates subsequent phosphorylation of UL31 and UL34 homologs by US3. Autophosphorylated.

It is found in the host cytoplasm. The protein resides in the host nucleus. The catalysed reaction is L-seryl-[protein] + ATP = O-phospho-L-seryl-[protein] + ADP + H(+). It catalyses the reaction L-threonyl-[protein] + ATP = O-phospho-L-threonyl-[protein] + ADP + H(+). Multifunctional serine/threonine kinase that plays a role in several processes including egress of virus particles from the nucleus, modulation of the actin cytoskeleton and inhibition of apoptosis. Phosphorylates UL31 and UL34 homologs, two critical regulators of capsid budding from nucleus to endoplasmic reticulum, thereby facilitating virion egress. Modulates and redistributes host components of the nuclear envelope, including LMNA, emerin/EMD and the nuclear matrix protein MATR3. Phosphorylates envelope glycoprotein B (gB), probably to direct it to the cell surface. Promotes virus intracellular spread by restructuring host cell cytoskeleton. Blocks host apoptosis to extend cell survival and allow efficient viral replication. Promotes viral gene expression by phosphorylating host HDAC2 to reduce viral genome silencing. The protein is Protein kinase US3 homolog (MDV092) of Gallus gallus (Chicken).